The chain runs to 371 residues: MASGISRTPATGVTAGGGDDEEAAWLHALELISGFTVSMTLKAAIQLGLIDALTAAADGRALTAGELVAQLPAVDDAEAATSVDRMLRLLASFNVVRCSTEAGPGGDPLRRYSPAPVCRWFTAGDNHQGSLAPRLMLDVDEDNLSTWHQMAAAVVSGGPSAFERAHGMPLFEYMGTNHRFNMLFNQAMSQQSMMVMNKLLDRFHGFDGISVLVDVGGGTGVTLKMIISRYKHITGVNFDLPHVISQAPSLPGVNHVAGNMFESVPKGDAIFLKSMLLRNDEECIKILKNCHYALSDNGKVIVVDIVLPETPKPVPEAQNPLRMDVMMLNNLRGGKIRTEQEYAKLAMDSGFSGSFRTTYIFANFMAIELCK.

137-143 contributes to the substrate binding site; it reads LDVDEDN. The segment at 170 to 188 is substrate binding; that stretch reads LFEYMGTNHRFNMLFNQAM. Residues Gly216, Asp239, Met260, and Lys273 each coordinate S-adenosyl-L-methionine.

This sequence belongs to the class I-like SAM-binding methyltransferase superfamily. Cation-independent O-methyltransferase family. COMT subfamily.

The chain is Probable inactive methyltransferase Os04g0175900 from Oryza sativa subsp. japonica (Rice).